The sequence spans 136 residues: Small ribosomal subunit protein uS9 (136 aa).

Residues 97–136 are disordered; the sequence is SPDNRKPLKTEGHLSRDPRAKERRKYGLKKARKAPQFSKR. Positions 98 to 116 are enriched in basic and acidic residues; sequence PDNRKPLKTEGHLSRDPRA. The segment covering 117-136 has biased composition (basic residues); the sequence is KERRKYGLKKARKAPQFSKR.

This sequence belongs to the universal ribosomal protein uS9 family.

In Prochlorococcus marinus (strain MIT 9312), this protein is Small ribosomal subunit protein uS9.